We begin with the raw amino-acid sequence, 433 residues long: ATP-dependent protease ATPase subunit HslU (433 aa).

ATP-binding positions include Val18, 60-65 (GVGKTE), Asp246, Glu311, and Arg383.

It belongs to the ClpX chaperone family. HslU subfamily. A double ring-shaped homohexamer of HslV is capped on each side by a ring-shaped HslU homohexamer. The assembly of the HslU/HslV complex is dependent on binding of ATP.

The protein resides in the cytoplasm. ATPase subunit of a proteasome-like degradation complex; this subunit has chaperone activity. The binding of ATP and its subsequent hydrolysis by HslU are essential for unfolding of protein substrates subsequently hydrolyzed by HslV. HslU recognizes the N-terminal part of its protein substrates and unfolds these before they are guided to HslV for hydrolysis. The sequence is that of ATP-dependent protease ATPase subunit HslU from Nitrobacter hamburgensis (strain DSM 10229 / NCIMB 13809 / X14).